Reading from the N-terminus, the 187-residue chain is Large ribosomal subunit protein mL49 (187 aa).

This sequence belongs to the mitochondrion-specific ribosomal protein mL49 family.

Its subcellular location is the mitochondrion. The protein is Large ribosomal subunit protein mL49 (mrpl-49) of Caenorhabditis elegans.